The primary structure comprises 173 residues: Alpha-crystallin A chain (173 aa).

Met1 is modified (N-acetylmethionine). The segment at 1–63 (MDIAIQHPWF…RSVLDSGVSE (63 aa)) is required for complex formation with BFSP1 and BFSP2. Gln6 carries the post-translational modification Deamidated glutamine; partial. Ser45 carries the post-translational modification Phosphoserine. Position 50 is a deamidated glutamine; partial (Gln50). Positions 52–162 (LFRSVLDSGV…GHSERAIPVS (111 aa)) constitute a sHSP domain. N6-acetyllysine is present on Lys70. Deamidated glutamine; partial is present on Gln90. Lys99 bears the N6-acetyllysine mark. His100 contacts Zn(2+). Position 101 is a deamidated asparagine; partial (Asn101). Zn(2+)-binding residues include Glu102 and His107. Ser122 bears the Phosphoserine mark. Deamidated asparagine; partial is present on Asn123. Residues 144 to 173 (PKIPSGMDAGHSERAIPVSREEKPSSAPSS) form a disordered region. A compositionally biased stretch (basic and acidic residues) spans 153–167 (GHSERAIPVSREEKP). His154 is a Zn(2+) binding site. The O-linked (GlcNAc) serine glycan is linked to Ser162.

This sequence belongs to the small heat shock protein (HSP20) family. In terms of assembly, heteromer composed of three CRYAA and one CRYAB subunits. Inter-subunit bridging via zinc ions enhances stability, which is crucial as there is no protein turn over in the lens. Can also form homodimers and homotetramers (dimers of dimers) which serve as the building blocks of homooligomers. Within homooligomers, the zinc-binding motif is created from residues of 3 different molecules. His-100 and Glu-102 from one molecule are ligands of the zinc ion, and His-107 and His-154 residues from additional molecules complete the site with tetrahedral coordination geometry. Part of a complex required for lens intermediate filament formation composed of BFSP1, BFSP2 and CRYAA. Acetylation at Lys-70 may increase chaperone activity. In terms of processing, undergoes age-dependent proteolytical cleavage at the C-terminus.

The protein resides in the cytoplasm. It is found in the nucleus. In terms of biological role, contributes to the transparency and refractive index of the lens. Acts as a chaperone, preventing aggregation of various proteins under a wide range of stress conditions. Required for the correct formation of lens intermediate filaments as part of a complex composed of BFSP1, BFSP2 and CRYAA. The sequence is that of Alpha-crystallin A chain (CRYAA) from Ceratotherium simum (White rhinoceros).